We begin with the raw amino-acid sequence, 275 residues long: Putative phosphoenolpyruvate synthase regulatory protein (275 aa).

An ADP-binding site is contributed by 157–164 (GVSRCGKT).

This sequence belongs to the pyruvate, phosphate/water dikinase regulatory protein family. PSRP subfamily.

It carries out the reaction [pyruvate, water dikinase] + ADP = [pyruvate, water dikinase]-phosphate + AMP + H(+). The catalysed reaction is [pyruvate, water dikinase]-phosphate + phosphate + H(+) = [pyruvate, water dikinase] + diphosphate. Bifunctional serine/threonine kinase and phosphorylase involved in the regulation of the phosphoenolpyruvate synthase (PEPS) by catalyzing its phosphorylation/dephosphorylation. The chain is Putative phosphoenolpyruvate synthase regulatory protein from Bordetella bronchiseptica (strain ATCC BAA-588 / NCTC 13252 / RB50) (Alcaligenes bronchisepticus).